We begin with the raw amino-acid sequence, 359 residues long: Phospho-N-acetylmuramoyl-pentapeptide-transferase (359 aa).

10 helical membrane passes run 3–23 (QILI…PALI), 55–75 (VAII…GLAF), 80–100 (ISAS…VGFL), 117–137 (TAKT…ALGF), 156–176 (IATV…VVSA), 187–207 (LDGL…LITF), 231–251 (LAIV…WNAA), 255–275 (IFMG…ISVT), 280–300 (ILAV…VLQI), and 334–354 (FWLL…GEWL).

This sequence belongs to the glycosyltransferase 4 family. MraY subfamily. Mg(2+) serves as cofactor.

The protein resides in the cell membrane. It catalyses the reaction UDP-N-acetyl-alpha-D-muramoyl-L-alanyl-gamma-D-glutamyl-meso-2,6-diaminopimeloyl-D-alanyl-D-alanine + di-trans,octa-cis-undecaprenyl phosphate = di-trans,octa-cis-undecaprenyl diphospho-N-acetyl-alpha-D-muramoyl-L-alanyl-D-glutamyl-meso-2,6-diaminopimeloyl-D-alanyl-D-alanine + UMP. Its pathway is cell wall biogenesis; peptidoglycan biosynthesis. Its function is as follows. Catalyzes the initial step of the lipid cycle reactions in the biosynthesis of the cell wall peptidoglycan: transfers peptidoglycan precursor phospho-MurNAc-pentapeptide from UDP-MurNAc-pentapeptide onto the lipid carrier undecaprenyl phosphate, yielding undecaprenyl-pyrophosphoryl-MurNAc-pentapeptide, known as lipid I. This is Phospho-N-acetylmuramoyl-pentapeptide-transferase from Mycobacterium avium (strain 104).